Here is a 408-residue protein sequence, read N- to C-terminus: Aminoacylase-1 (408 aa).

Residue His80 participates in Zn(2+) binding. The active site involves Asp82. Residue Asp113 participates in Zn(2+) binding. Glu147 acts as the Proton acceptor in catalysis. The Zn(2+) site is built by Glu148, Glu175, and His373.

It belongs to the peptidase M20A family. Homodimer. Interacts with SPHK1. The cofactor is Zn(2+). As to expression, expression is highest in kidney, strong in brain and weaker in placenta and spleen.

It is found in the cytoplasm. The catalysed reaction is an N-acyl-L-amino acid + H2O = an L-alpha-amino acid + a carboxylate. It catalyses the reaction N-acetyl-L-methionine + H2O = L-methionine + acetate. The enzyme catalyses N-acetyl-L-glutamine + H2O = L-glutamine + acetate. In terms of biological role, catalyzes the hydrolysis of N-acetylated amino acids to acetate and free amino acids. The polypeptide is Aminoacylase-1 (ACY1) (Homo sapiens (Human)).